Reading from the N-terminus, the 65-residue chain is Large ribosomal subunit protein bL32 (65 aa).

This sequence belongs to the bacterial ribosomal protein bL32 family.

This is Large ribosomal subunit protein bL32 from Phytoplasma australiense.